A 208-amino-acid chain; its full sequence is Neuroendocrine protein 7B2 (208 aa).

A signal peptide spans 1 to 26 (MGMYSAIPLALPMVLLMVYGLTPSLG). Cysteine 120 and cysteine 129 form a disulfide bridge. Serine 204 carries the phosphoserine modification.

Belongs to the 7B2 family. Interacts with pcsk2 early in the secretory pathway. Dissociation occurs at later stages. In terms of processing, proteolytically cleaved in the Golgi by a furin-like convertase to generate bioactive peptides. Post-translationally, sulfated on tyrosine residues.

It is found in the secreted. Its function is as follows. Acts as a molecular chaperone for pcsk2, preventing its premature activation in the regulated secretory pathway. Binds to inactive pcsk2 in the endoplasmic reticulum and facilitates its transport from there to later compartments of the secretory pathway where it is proteolytically matured and activated. Also required for cleavage of pcsk2 but does not appear to be involved in its folding. In Xenopus laevis (African clawed frog), this protein is Neuroendocrine protein 7B2 (scg5.L).